The chain runs to 242 residues: Ditrans,polycis-undecaprenyl-diphosphate synthase ((2E,6E)-farnesyl-diphosphate specific) (242 aa).

D21 is a catalytic residue. Position 21 (D21) interacts with Mg(2+). Substrate contacts are provided by residues 22–25 (GNGR), W26, R34, H38, and 66–68 (SSE). N69 functions as the Proton acceptor in the catalytic mechanism. Substrate-binding positions include W70, R72, R189, and 195–197 (RIS). E208 lines the Mg(2+) pocket.

The protein belongs to the UPP synthase family. Homodimer. Mg(2+) serves as cofactor.

It catalyses the reaction 8 isopentenyl diphosphate + (2E,6E)-farnesyl diphosphate = di-trans,octa-cis-undecaprenyl diphosphate + 8 diphosphate. Functionally, catalyzes the sequential condensation of isopentenyl diphosphate (IPP) with (2E,6E)-farnesyl diphosphate (E,E-FPP) to yield (2Z,6Z,10Z,14Z,18Z,22Z,26Z,30Z,34E,38E)-undecaprenyl diphosphate (di-trans,octa-cis-UPP). UPP is the precursor of glycosyl carrier lipid in the biosynthesis of bacterial cell wall polysaccharide components such as peptidoglycan and lipopolysaccharide. The chain is Ditrans,polycis-undecaprenyl-diphosphate synthase ((2E,6E)-farnesyl-diphosphate specific) from Haemophilus ducreyi (strain 35000HP / ATCC 700724).